Here is a 325-residue protein sequence, read N- to C-terminus: GMP reductase (325 aa).

The Thioimidate intermediate role is filled by C174. 203–226 lines the NADP(+) pocket; that stretch reads IIADGGIRTNGDIAKSIRFGANMV.

The protein belongs to the IMPDH/GMPR family. GuaC type 2 subfamily.

It catalyses the reaction IMP + NH4(+) + NADP(+) = GMP + NADPH + 2 H(+). Functionally, catalyzes the irreversible NADPH-dependent deamination of GMP to IMP. It functions in the conversion of nucleobase, nucleoside and nucleotide derivatives of G to A nucleotides, and in maintaining the intracellular balance of A and G nucleotides. In Latilactobacillus sakei subsp. sakei (strain 23K) (Lactobacillus sakei subsp. sakei), this protein is GMP reductase.